Here is a 190-residue protein sequence, read N- to C-terminus: GTP cyclohydrolase 1 (190 aa).

Zn(2+)-binding residues include Cys-78, His-81, and Cys-150.

The protein belongs to the GTP cyclohydrolase I family. As to quaternary structure, toroid-shaped homodecamer, composed of two pentamers of five dimers.

It catalyses the reaction GTP + H2O = 7,8-dihydroneopterin 3'-triphosphate + formate + H(+). It functions in the pathway cofactor biosynthesis; 7,8-dihydroneopterin triphosphate biosynthesis; 7,8-dihydroneopterin triphosphate from GTP: step 1/1. K(+) ions moderately increases the Vmax, whereas UTP and Ca(2+) and Mg(2+) ions drastically increase the Km for GTP. The chain is GTP cyclohydrolase 1 (folE) from Bacillus subtilis (strain 168).